Consider the following 375-residue polypeptide: Peroxisomal targeting signal 2 receptor (375 aa).

6 WD repeats span residues 58–89 (LTQD…RLFD), 102–133 (EHER…KIWS), 172–203 (KNRN…SLFD), 218–249 (HSGL…RIWD), 281–312 (AHGL…RIWR), and 340–372 (QHSE…FVWN).

This sequence belongs to the WD repeat peroxin-7 family. Interacts with PEX21.

It localises to the cytoplasm. The protein resides in the cytosol. The protein localises to the peroxisome matrix. Receptor required for the peroxisomal import of proteins containing a C-terminal PTS2-type peroxisomal targeting signal, such as 3-oxoacyl-CoA thiolase. Specifically binds to cargo proteins containing a PTS2 peroxisomal targeting signal in the cytosol. Cargo protein-binding triggers interaction with PEX21 and formation of a ternary complex composed of PEX21 and PEX7 along with PTS2-containing cargo proteins, which is tranlocated into peroxisomes by passing through the PEX13-PEX14 docking complex. This is Peroxisomal targeting signal 2 receptor from Saccharomyces cerevisiae (strain ATCC 204508 / S288c) (Baker's yeast).